Reading from the N-terminus, the 906-residue chain is Protein translocase subunit SecA (906 aa).

ATP is bound by residues Gln87, Gly105–Thr109, and Asp507. The segment covering Arg553–Leu563 has biased composition (basic and acidic residues). Disordered regions lie at residues Arg553–Ser576 and Leu854–Ala906. 4 residues coordinate Zn(2+): Cys890, Cys892, Cys901, and His902. Positions Lys896–Ala906 are enriched in basic residues.

Belongs to the SecA family. Monomer and homodimer. Part of the essential Sec protein translocation apparatus which comprises SecA, SecYEG and auxiliary proteins SecDF-YajC and YidC. The cofactor is Zn(2+).

Its subcellular location is the cell inner membrane. The protein resides in the cytoplasm. The enzyme catalyses ATP + H2O + cellular proteinSide 1 = ADP + phosphate + cellular proteinSide 2.. Functionally, part of the Sec protein translocase complex. Interacts with the SecYEG preprotein conducting channel. Has a central role in coupling the hydrolysis of ATP to the transfer of proteins into and across the cell membrane, serving both as a receptor for the preprotein-SecB complex and as an ATP-driven molecular motor driving the stepwise translocation of polypeptide chains across the membrane. The polypeptide is Protein translocase subunit SecA (Methylococcus capsulatus (strain ATCC 33009 / NCIMB 11132 / Bath)).